The chain runs to 344 residues: MKLAILGAGCYRTHAASGITNFSRACEVAEMVGKPEIAMTHSTITMGAELKELAGVDEVVVADPVFDNQFTVIDDFAYEDVIEAHKEDPEKIMPQIREKVNEVAKELPKPPEGAIHFTHPEDLGFEITTDDREAVADADFIMTWFPKGDMQPGIINKFIDDIKPGAIVTHACTIPTTKFYKIFEEKHGDLVTRPETLNVTSYHPGAVPEMKGQVYIAEAYASEEAINTLFELGQKARGNAYKLPAELLGPVCDMCSALTAITYAGILTYRDSVTQVLGAPAGFAQMMAKESLEQLTALMDKVGIDKMEESLDPGALLGTADSMNFGASAEILPTVFEVLEKRKK.

This sequence belongs to the HMD family.

The enzyme catalyses 5,10-methenyl-5,6,7,8-tetrahydromethanopterin + H2 = 5,10-methylenetetrahydromethanopterin + H(+). It participates in one-carbon metabolism; methanogenesis from CO(2); 5,10-methylene-5,6,7,8-tetrahydromethanopterin from 5,10-methenyl-5,6,7,8-tetrahydromethanopterin (hydrogen route): step 1/1. Catalyzes the reversible reduction of methenyl-H(4)MPT(+) to methylene-H(4)MPT. This Methanothermobacter thermautotrophicus (strain Winter) (Methanobacterium thermoautotrophicum) protein is 5,10-methenyltetrahydromethanopterin hydrogenase (hmd).